A 289-amino-acid chain; its full sequence is Acetyl-coenzyme A carboxylase carboxyl transferase subunit beta (289 aa).

One can recognise a CoA carboxyltransferase N-terminal domain in the interval 28 to 289 (VMTKCPECKK…QGGGMAVWQS (262 aa)). Cys-32, Cys-35, Cys-51, and Cys-54 together coordinate Zn(2+). Residues 32–54 (CPECKKIMYTKELLKNLKVCVNC) form a C4-type zinc finger.

The protein belongs to the AccD/PCCB family. Acetyl-CoA carboxylase is a heterohexamer composed of biotin carboxyl carrier protein (AccB), biotin carboxylase (AccC) and two subunits each of ACCase subunit alpha (AccA) and ACCase subunit beta (AccD). Requires Zn(2+) as cofactor.

It localises to the cytoplasm. The enzyme catalyses N(6)-carboxybiotinyl-L-lysyl-[protein] + acetyl-CoA = N(6)-biotinyl-L-lysyl-[protein] + malonyl-CoA. Its pathway is lipid metabolism; malonyl-CoA biosynthesis; malonyl-CoA from acetyl-CoA: step 1/1. Its function is as follows. Component of the acetyl coenzyme A carboxylase (ACC) complex. Biotin carboxylase (BC) catalyzes the carboxylation of biotin on its carrier protein (BCCP) and then the CO(2) group is transferred by the transcarboxylase to acetyl-CoA to form malonyl-CoA. This chain is Acetyl-coenzyme A carboxylase carboxyl transferase subunit beta, found in Bacillus cereus (strain G9842).